The sequence spans 418 residues: Voltage-gated ClC-type chloride channel ClcB (418 aa).

The next 10 helical transmembrane spans lie at 5 to 25 (LLIA…FRHA), 54 to 74 (LLTP…WQKF), 146 to 166 (LWIA…PLAG), 168 to 188 (LFIA…PVII), 222 to 242 (ALII…LTLM), 258 to 278 (WQLA…PAVW), 291 to 311 (APPL…AVLA), 316 to 336 (GAPG…GMLY), 352 to 372 (LLLG…APIM), and 380 to 400 (MTGE…ASVI).

Belongs to the chloride channel (TC 2.A.49) family. ClcB subfamily.

Its subcellular location is the cell inner membrane. In terms of biological role, probably acts as an electrical shunt for an outwardly-directed proton pump that is linked to amino acid decarboxylation, as part of the extreme acid resistance (XAR) response. This chain is Voltage-gated ClC-type chloride channel ClcB, found in Escherichia coli O127:H6 (strain E2348/69 / EPEC).